Reading from the N-terminus, the 426-residue chain is Histidine--tRNA ligase (426 aa).

This sequence belongs to the class-II aminoacyl-tRNA synthetase family. In terms of assembly, homodimer.

The protein resides in the cytoplasm. The enzyme catalyses tRNA(His) + L-histidine + ATP = L-histidyl-tRNA(His) + AMP + diphosphate + H(+). The chain is Histidine--tRNA ligase from Streptococcus sanguinis (strain SK36).